The following is a 400-amino-acid chain: Probable peptidoglycan D,D-transpeptidase PenA (400 aa).

The interval 1–21 (NIDGKGQEGLELSREDSLRGE) is disordered. Catalysis depends on Ser128, which acts as the Acyl-ester intermediate.

The protein belongs to the transpeptidase family. FtsI subfamily.

The protein localises to the cell inner membrane. It catalyses the reaction Preferential cleavage: (Ac)2-L-Lys-D-Ala-|-D-Ala. Also transpeptidation of peptidyl-alanyl moieties that are N-acyl substituents of D-alanine.. It participates in cell wall biogenesis; peptidoglycan biosynthesis. Catalyzes cross-linking of the peptidoglycan cell wall at the division septum. This is Probable peptidoglycan D,D-transpeptidase PenA from Neisseria flavescens.